Reading from the N-terminus, the 147-residue chain is MSSKVTRKIYFCGSIRGGREDAALYKRIIDQLQSYGEVLTEHVGDLEAQEEELGETCDDYYIHERDINWLFSSDAVVAEVTQPSLGVGYELGRALEHKKNVLCLYRPQPGKRLSAMIKGAENGKNFFVKEYKEEDVPDLLMNFFTSL.

Residues 10–16 (YFCGSIR), tyrosine 25, histidine 42, glutamate 90, and 114–116 (SAM) each bind substrate.

It belongs to the 2'-deoxynucleoside 5'-phosphate N-hydrolase 1 family. Monomer and homodimer.

It is found in the cytoplasm. The protein resides in the nucleus. The enzyme catalyses a pyrimidine 2'-deoxyribonucleoside 5'-phosphate + H2O = a pyrimidine nucleobase + 2-deoxy-D-ribose 5-phosphate. It carries out the reaction a purine 2'-deoxyribonucleoside 5'-phosphate + H2O = a purine nucleobase + 2-deoxy-D-ribose 5-phosphate. Functionally, catalyzes the cleavage of the N-glycosidic bond of deoxyribonucleoside 5'-monophosphates to yield deoxyribose 5-phosphate and a purine or pyrimidine base. This Nematostella vectensis (Starlet sea anemone) protein is Putative 2'-deoxynucleoside 5'-phosphate N-hydrolase 1.